Here is a 94-residue protein sequence, read N- to C-terminus: Co-chaperonin GroES (94 aa).

This sequence belongs to the GroES chaperonin family. As to quaternary structure, heptamer of 7 subunits arranged in a ring. Interacts with the chaperonin GroEL.

The protein resides in the cytoplasm. Its function is as follows. Together with the chaperonin GroEL, plays an essential role in assisting protein folding. The GroEL-GroES system forms a nano-cage that allows encapsulation of the non-native substrate proteins and provides a physical environment optimized to promote and accelerate protein folding. GroES binds to the apical surface of the GroEL ring, thereby capping the opening of the GroEL channel. This chain is Co-chaperonin GroES, found in Streptococcus equinus (Streptococcus bovis).